Reading from the N-terminus, the 570-residue chain is Glutamate--tRNA ligase (570 aa).

The 'HIGH' region signature appears at 107 to 117 (PNPDFVLHLGS).

It belongs to the class-I aminoacyl-tRNA synthetase family. Glutamate--tRNA ligase type 2 subfamily.

Its subcellular location is the cytoplasm. It carries out the reaction tRNA(Glu) + L-glutamate + ATP = L-glutamyl-tRNA(Glu) + AMP + diphosphate. In terms of biological role, catalyzes the attachment of glutamate to tRNA(Glu) in a two-step reaction: glutamate is first activated by ATP to form Glu-AMP and then transferred to the acceptor end of tRNA(Glu). In Pyrobaculum islandicum (strain DSM 4184 / JCM 9189 / GEO3), this protein is Glutamate--tRNA ligase.